The sequence spans 196 residues: MKPLVVFVLGGPGAGKGTQCARIVEKYGYTHLSAGELLRDERKNPDSQYGELIEKYIKEGKIVPVEITISLLKREMDQTMAANAQKNKFLIDGFPRNQDNLQGWNKTMDGKADVSFVLFFDCNNEICIDRCLERGKSSGRSDDNRESLEKRIQTYLESTKPIIDLYEEMGKVKKIDASKSVDEVFGDVMKIFDKEG.

13–18 serves as a coordination point for ATP; sequence GAGKGT. A Phosphoserine modification is found at Ser-33. The segment at 33–63 is NMP; that stretch reads SAGELLRDERKNPDSQYGELIEKYIKEGKIV. An a ribonucleoside 5'-phosphate-binding site is contributed by Arg-39. Lys-43 and Lys-55 each carry N6-acetyllysine. 61 to 63 is a binding site for a ribonucleoside 5'-phosphate; that stretch reads KIV. Lys-73 participates in a covalent cross-link: Glycyl lysine isopeptide (Lys-Gly) (interchain with G-Cter in SUMO2). Position 93–96 (93–96) interacts with a ribonucleoside 5'-phosphate; it reads GFPR. Asn-100 lines the CMP pocket. The residue at position 106 (Lys-106) is an N6-succinyllysine. The segment at 133 to 143 is LID; the sequence is ERGKSSGRSDD. Residue Arg-134 participates in ATP binding. Arg-140 and Arg-151 together coordinate a ribonucleoside 5'-phosphate. Lys-179 serves as a coordination point for ATP. The residue at position 180 (Ser-180) is a Phosphoserine.

This sequence belongs to the adenylate kinase family. UMP-CMP kinase subfamily. As to quaternary structure, monomer. It depends on Mg(2+) as a cofactor.

The protein localises to the nucleus. The protein resides in the cytoplasm. The enzyme catalyses CMP + ATP = CDP + ADP. The catalysed reaction is dCMP + ATP = dCDP + ADP. It catalyses the reaction UMP + ATP = UDP + ADP. It carries out the reaction a 2'-deoxyribonucleoside 5'-diphosphate + ATP = a 2'-deoxyribonucleoside 5'-triphosphate + ADP. The enzyme catalyses a ribonucleoside 5'-diphosphate + ATP = a ribonucleoside 5'-triphosphate + ADP. Functionally, catalyzes the phosphorylation of pyrimidine nucleoside monophosphates at the expense of ATP. Plays an important role in de novo pyrimidine nucleotide biosynthesis. Has preference for UMP and CMP as phosphate acceptors. Also displays broad nucleoside diphosphate kinase activity. This is UMP-CMP kinase (Cmpk1) from Rattus norvegicus (Rat).